Reading from the N-terminus, the 77-residue chain is uncharacterized protein (77 aa).

Residues 57–76 (NSAVICTLIANLMAFFMLLT) traverse the membrane as a helical segment.

The protein resides in the membrane. This is an uncharacterized protein from Schizosaccharomyces pombe (strain 972 / ATCC 24843) (Fission yeast).